We begin with the raw amino-acid sequence, 222 residues long: N-(5'-phosphoribosyl)anthranilate isomerase (222 aa).

The protein belongs to the TrpF family.

It catalyses the reaction N-(5-phospho-beta-D-ribosyl)anthranilate = 1-(2-carboxyphenylamino)-1-deoxy-D-ribulose 5-phosphate. Its pathway is amino-acid biosynthesis; L-tryptophan biosynthesis; L-tryptophan from chorismate: step 3/5. In Xanthomonas euvesicatoria pv. vesicatoria (strain 85-10) (Xanthomonas campestris pv. vesicatoria), this protein is N-(5'-phosphoribosyl)anthranilate isomerase.